The primary structure comprises 352 residues: Carbohydrate sulfotransferase 11 (352 aa).

The Cytoplasmic segment spans residues 1–16 (MKQTILDLMRMSRICR). A helical; Signal-anchor for type II membrane protein transmembrane segment spans residues 17-37 (MVLATCLGSFILVIFYFQSMF). The Lumenal segment spans residues 38-352 (QPVMRRNPFA…YSIPSYLKLQ (315 aa)). Residues 124 to 130 (PKVACTN) and 186 to 194 (REPFERLVS) contribute to the 3'-phosphoadenylyl sulfate site. N-linked (GlcNAc...) asparagine glycosylation is found at asparagine 205, asparagine 223, asparagine 321, and asparagine 342.

The protein belongs to the sulfotransferase 2 family.

The protein resides in the golgi apparatus membrane. It carries out the reaction chondroitin beta-D-glucuronate + n 3'-phosphoadenylyl sulfate = chondroitin 4'-sulfate + n adenosine 3',5'-bisphosphate + n H(+). Catalyzes the transfer of sulfate to position 4 of the N-acetylgalactosamine (GalNAc) residue of chondroitin. The polypeptide is Carbohydrate sulfotransferase 11 (chst11) (Danio rerio (Zebrafish)).